The sequence spans 151 residues: Protein archease-like (151 aa).

Ca(2+)-binding residues include aspartate 20, aspartate 150, and isoleucine 151.

This sequence belongs to the archease family.

Component of the tRNA-splicing ligase complex required to facilitate the enzymatic turnover of catalytic subunit RtcB. This Dictyostelium discoideum (Social amoeba) protein is Protein archease-like.